We begin with the raw amino-acid sequence, 233 residues long: Small ribosomal subunit protein uS3 (233 aa).

The region spanning 39–107 (VRQFLTKELS…PAQINTYEIR (69 aa)) is the KH type-2 domain.

Belongs to the universal ribosomal protein uS3 family. Part of the 30S ribosomal subunit. Forms a tight complex with proteins S10 and S14.

In terms of biological role, binds the lower part of the 30S subunit head. Binds mRNA in the 70S ribosome, positioning it for translation. The protein is Small ribosomal subunit protein uS3 of Hamiltonella defensa subsp. Acyrthosiphon pisum (strain 5AT).